Consider the following 410-residue polypeptide: Peptidase T (410 aa).

His78 provides a ligand contact to Zn(2+). Asp80 is a catalytic residue. Asp139 is a Zn(2+) binding site. Glu173 serves as the catalytic Proton acceptor. Residues Glu174, Asp196, and His378 each coordinate Zn(2+).

Belongs to the peptidase M20B family. The cofactor is Zn(2+).

The protein resides in the cytoplasm. It catalyses the reaction Release of the N-terminal residue from a tripeptide.. In terms of biological role, cleaves the N-terminal amino acid of tripeptides. The chain is Peptidase T from Shewanella woodyi (strain ATCC 51908 / MS32).